A 778-amino-acid chain; its full sequence is Ent-trachylobane synthase KSL2, chloroplastic (778 aa).

The transit peptide at 1 to 37 (MLLTCTNSLKISSQAKEWESKTLTGMSLEQLNKRIRI) directs the protein to the chloroplast. Asp529, Asp533, Asn672, Asp673, and Asp680 together coordinate Mg(2+). A DDXXD motif motif is present at residues 529-533 (DDFFD).

The protein belongs to the terpene synthase family. The cofactor is Mg(2+).

It localises to the plastid. Its subcellular location is the chloroplast. The enzyme catalyses ent-copalyl diphosphate = ent-trachylobane + diphosphate. It carries out the reaction ent-copalyl diphosphate = ent-kaur-16-ene + diphosphate. Its pathway is secondary metabolite biosynthesis; terpenoid biosynthesis. Diterpene cyclase involved in the biosynthesis of labdane-related diterpenoids (LRDs) natural products. Catalyzes the cyclization of ent-CDP into ent-trachylobane as a major and ent-kaurene as a minor product. The sequence is that of Ent-trachylobane synthase KSL2, chloroplastic from Ricinus communis (Castor bean).